The primary structure comprises 138 residues: Large ribosomal subunit protein bL19 (138 aa).

The protein belongs to the bacterial ribosomal protein bL19 family.

Functionally, this protein is located at the 30S-50S ribosomal subunit interface and may play a role in the structure and function of the aminoacyl-tRNA binding site. This is Large ribosomal subunit protein bL19 from Rickettsia peacockii (strain Rustic).